We begin with the raw amino-acid sequence, 404 residues long: Argininosuccinate synthase (404 aa).

Residues 12-20 (AYSGGLDTS) and A39 contribute to the ATP site. Positions 91 and 96 each coordinate L-citrulline. G121 is an ATP binding site. L-aspartate is bound by residues T123, N127, and D128. Residue N127 participates in L-citrulline binding. Residues R131, S180, S189, E265, and Y277 each coordinate L-citrulline.

This sequence belongs to the argininosuccinate synthase family. Type 1 subfamily. As to quaternary structure, homotetramer.

The protein resides in the cytoplasm. It catalyses the reaction L-citrulline + L-aspartate + ATP = 2-(N(omega)-L-arginino)succinate + AMP + diphosphate + H(+). It functions in the pathway amino-acid biosynthesis; L-arginine biosynthesis; L-arginine from L-ornithine and carbamoyl phosphate: step 2/3. The chain is Argininosuccinate synthase from Vibrio parahaemolyticus serotype O3:K6 (strain RIMD 2210633).